A 514-amino-acid polypeptide reads, in one-letter code: L-Threonine dehydratase biosynthetic IlvA (514 aa).

The residue at position 62 (Lys62) is an N6-(pyridoxal phosphate)lysine. Pyridoxal 5'-phosphate contacts are provided by residues Asn89, 188–192, and Ser315; that span reads GGGGL. 2 ACT-like domains span residues 339 to 411 and 434 to 504; these read ALLA…DLSD and RLYS…DESN.

This sequence belongs to the serine/threonine dehydratase family. As to quaternary structure, homotetramer. Pyridoxal 5'-phosphate serves as cofactor.

It carries out the reaction L-threonine = 2-oxobutanoate + NH4(+). It functions in the pathway amino-acid biosynthesis; L-isoleucine biosynthesis; 2-oxobutanoate from L-threonine: step 1/1. Isoleucine allosterically inhibits whereas valine allosterically activates this enzyme. Catalyzes the anaerobic formation of alpha-ketobutyrate and ammonia from threonine in a two-step reaction. The first step involved a dehydration of threonine and a production of enamine intermediates (aminocrotonate), which tautomerizes to its imine form (iminobutyrate). Both intermediates are unstable and short-lived. The second step is the nonenzymatic hydrolysis of the enamine/imine intermediates to form 2-ketobutyrate and free ammonia. In the low water environment of the cell, the second step is accelerated by RidA. This chain is L-Threonine dehydratase biosynthetic IlvA (ilvA), found in Salmonella typhimurium (strain LT2 / SGSC1412 / ATCC 700720).